A 152-amino-acid chain; its full sequence is Superoxide dismutase [Cu-Zn] 2 (152 aa).

3 residues coordinate Cu cation: His45, His47, and His62. Positions 53–81 (TNGSMSTGPHFNPDGKQHGAPEDANRHAG) are disordered. Zn(2+) contacts are provided by His62, His70, His79, and Asp82. Positions 65 to 81 (PDGKQHGAPEDANRHAG) are enriched in basic and acidic residues. His119 lines the Cu cation pocket.

Belongs to the Cu-Zn superoxide dismutase family. As to quaternary structure, homodimer. Cu cation serves as cofactor. Zn(2+) is required as a cofactor.

Its subcellular location is the cytoplasm. It catalyses the reaction 2 superoxide + 2 H(+) = H2O2 + O2. In terms of biological role, destroys radicals which are normally produced within the cells and which are toxic to biological systems. The protein is Superoxide dismutase [Cu-Zn] 2 (SODCC2) of Brassica juncea (Indian mustard).